The chain runs to 134 residues: Phosphoribosyl-AMP cyclohydrolase (134 aa).

Aspartate 77 contributes to the Mg(2+) binding site. Cysteine 78 contacts Zn(2+). Aspartate 79 and aspartate 81 together coordinate Mg(2+). Residues cysteine 95 and cysteine 102 each contribute to the Zn(2+) site.

The protein belongs to the PRA-CH family. As to quaternary structure, homodimer. The cofactor is Mg(2+). Zn(2+) serves as cofactor.

The protein resides in the cytoplasm. It catalyses the reaction 1-(5-phospho-beta-D-ribosyl)-5'-AMP + H2O = 1-(5-phospho-beta-D-ribosyl)-5-[(5-phospho-beta-D-ribosylamino)methylideneamino]imidazole-4-carboxamide. It functions in the pathway amino-acid biosynthesis; L-histidine biosynthesis; L-histidine from 5-phospho-alpha-D-ribose 1-diphosphate: step 3/9. Catalyzes the hydrolysis of the adenine ring of phosphoribosyl-AMP. In Pseudomonas paraeruginosa (strain DSM 24068 / PA7) (Pseudomonas aeruginosa (strain PA7)), this protein is Phosphoribosyl-AMP cyclohydrolase.